We begin with the raw amino-acid sequence, 128 residues long: uncharacterized protein (128 aa).

This is an uncharacterized protein from Botryotinia fuckeliana (Noble rot fungus).